Consider the following 515-residue polypeptide: Histidine ammonia-lyase (515 aa).

Residues 145 to 147 (ASG) constitute a cross-link (5-imidazolinone (Ala-Gly)). A 2,3-didehydroalanine (Ser) modification is found at Ser146.

This sequence belongs to the PAL/histidase family. Post-translationally, contains an active site 4-methylidene-imidazol-5-one (MIO), which is formed autocatalytically by cyclization and dehydration of residues Ala-Ser-Gly.

Its subcellular location is the cytoplasm. The catalysed reaction is L-histidine = trans-urocanate + NH4(+). It participates in amino-acid degradation; L-histidine degradation into L-glutamate; N-formimidoyl-L-glutamate from L-histidine: step 1/3. The protein is Histidine ammonia-lyase of Gluconobacter oxydans (strain 621H) (Gluconobacter suboxydans).